Here is a 309-residue protein sequence, read N- to C-terminus: Taste receptor type 2 member 8 (309 aa).

Residues 1–7 (MFSPADN) lie on the Extracellular side of the membrane. The helical transmembrane segment at 8–28 (IFIILITGEFILGILGNGYIA) threads the bilayer. At 29–50 (LVNWIDWIKKKKISTVDYILTN) the chain is on the cytoplasmic side. Residues 51–71 (LVIARICLISVMVVNGIVIVL) form a helical membrane-spanning segment. Topologically, residues 72 to 82 (NPDVYTKNKQQ) are extracellular. Residues 83–103 (IVIFTFWTFANYLNMWITTCL) traverse the membrane as a helical segment. Topologically, residues 104–131 (NVFYFLKIASSSHPLFLWLKWKIDMVVH) are cytoplasmic. A helical membrane pass occupies residues 132 to 152 (WILLGCFAISLLVSLIAAIVL). At 153–184 (SCDYRFHAIAKHKRNITEMFXVSKIPYFEPLT) the chain is on the extracellular side. N-linked (GlcNAc...) asparagine glycosylation is present at Asn-167. Residues 185-205 (LFNLFAIVPFIVSLISFFLLV) traverse the membrane as a helical segment. Residues 206-239 (RSLWRHTKQIKLYATGSRDPSTEVHVRAIKTMTS) are Cytoplasmic-facing. A helical transmembrane segment spans residues 240 to 260 (FIFFFFLYFISSILMTFSYLM). Topologically, residues 261–266 (TKYKLA) are extracellular. A helical transmembrane segment spans residues 267 to 287 (VEFGEIAAILYPLGHSLILIV). Residues 288–309 (LNNKLRQIFVRMLTCRKIACVI) are Cytoplasmic-facing.

This sequence belongs to the G-protein coupled receptor T2R family.

The protein resides in the membrane. Its function is as follows. Receptor that may play a role in the perception of bitterness and is gustducin-linked. May play a role in sensing the chemical composition of the gastrointestinal content. The activity of this receptor may stimulate alpha gustducin, mediate PLC-beta-2 activation and lead to the gating of TRPM5. In Pan troglodytes (Chimpanzee), this protein is Taste receptor type 2 member 8 (TAS2R8).